Consider the following 336-residue polypeptide: Glyceraldehyde-3-phosphate dehydrogenase (336 aa).

Residues 12 to 13 (RI), Asp34, and Arg79 each bind NAD(+). D-glyceraldehyde 3-phosphate contacts are provided by residues 150-152 (SCT), Thr181, 210-211 (TG), and Arg233. Residue Cys151 is the Nucleophile of the active site. Asn315 contributes to the NAD(+) binding site.

The protein belongs to the glyceraldehyde-3-phosphate dehydrogenase family. As to quaternary structure, homotetramer.

It localises to the cytoplasm. The catalysed reaction is D-glyceraldehyde 3-phosphate + phosphate + NAD(+) = (2R)-3-phospho-glyceroyl phosphate + NADH + H(+). Its pathway is carbohydrate degradation; glycolysis; pyruvate from D-glyceraldehyde 3-phosphate: step 1/5. This chain is Glyceraldehyde-3-phosphate dehydrogenase (gpdA), found in Aspergillus niger.